The chain runs to 538 residues: Zinc finger protein with KRAB and SCAN domains 3 (538 aa).

Ser-42 is modified (phosphoserine). An SCAN box domain is found at 46–128 (RERFRGFRYP…VLLEYLERQL (83 aa)). Lys-171 is covalently cross-linked (Glycyl lysine isopeptide (Lys-Gly) (interchain with G-Cter in SUMO2)). Thr-207 is modified (phosphothreonine). The KRAB domain maps to 214 to 274 (LKVEDVALTL…PAEELPEKEH (61 aa)). The span at 226-236 (EWTQQDSSQGN) shows a compositional bias: polar residues. A disordered region spans residues 226–274 (EWTQQDSSQGNLCRDEKQENHGSLVSLGDEKQTKSRDLPPAEELPEKEH). A compositionally biased stretch (basic and acidic residues) spans 253–274 (GDEKQTKSRDLPPAEELPEKEH). C2H2-type zinc fingers lie at residues 314–336 (HICH…RRIH), 342–364 (YECE…QRVH), 370–392 (YECE…QRTH), 398–420 (YECD…HRIH), and 426–448 (YQCS…QRIH). Thr-449 is modified (phosphothreonine). 2 consecutive C2H2-type zinc fingers follow at residues 480–502 (YKCN…QKIH) and 508–530 (YQCN…QRSH).

This sequence belongs to the krueppel C2H2-type zinc-finger protein family.

Its subcellular location is the nucleus. It localises to the cytoplasm. Its function is as follows. Transcriptional factor that binds to the consensus sequence 5'-[GT][AG][AGT]GGGG-3' and acts as a repressor of autophagy. Specifically represses expression of genes involved in autophagy and lysosome biogenesis/function such as MAP1LC3B, ULK1 or WIPI2. Associates with chromatin at the ITGB4 and VEGF promoters. Also acts as a transcription activator and promotes cancer cell progression and/or migration in various tumors and myelomas. This chain is Zinc finger protein with KRAB and SCAN domains 3 (ZKSCAN3), found in Homo sapiens (Human).